Consider the following 316-residue polypeptide: tRNA dimethylallyltransferase (316 aa).

ATP is bound at residue 23 to 30; sequence GPTASGKS. 25–30 provides a ligand contact to substrate; sequence TASGKS. Residues 48–51 form an interaction with substrate tRNA region; the sequence is DSMQ.

The protein belongs to the IPP transferase family. Monomer. The cofactor is Mg(2+).

It carries out the reaction adenosine(37) in tRNA + dimethylallyl diphosphate = N(6)-dimethylallyladenosine(37) in tRNA + diphosphate. In terms of biological role, catalyzes the transfer of a dimethylallyl group onto the adenine at position 37 in tRNAs that read codons beginning with uridine, leading to the formation of N6-(dimethylallyl)adenosine (i(6)A). In Rhodopseudomonas palustris (strain BisB18), this protein is tRNA dimethylallyltransferase.